Consider the following 357-residue polypeptide: Phospho-N-acetylmuramoyl-pentapeptide-transferase (357 aa).

10 helical membrane passes run 23–43 (AIFS…YFIY), 70–90 (TMGG…YCNL), 91–111 (SNIY…IGFI), 127–147 (LKWK…MIKI), 171–191 (YLYV…VNLT), 196–216 (GLAI…SLFS), 236–256 (LAIL…FNSY), 260–280 (VFMG…IAIL), 286–306 (LLII…LQII), and 334–354 (LIIV…LISL).

The protein belongs to the glycosyltransferase 4 family. MraY subfamily. Mg(2+) serves as cofactor.

The protein localises to the cell inner membrane. The enzyme catalyses UDP-N-acetyl-alpha-D-muramoyl-L-alanyl-gamma-D-glutamyl-meso-2,6-diaminopimeloyl-D-alanyl-D-alanine + di-trans,octa-cis-undecaprenyl phosphate = di-trans,octa-cis-undecaprenyl diphospho-N-acetyl-alpha-D-muramoyl-L-alanyl-D-glutamyl-meso-2,6-diaminopimeloyl-D-alanyl-D-alanine + UMP. It participates in cell wall biogenesis; peptidoglycan biosynthesis. In terms of biological role, catalyzes the initial step of the lipid cycle reactions in the biosynthesis of the cell wall peptidoglycan: transfers peptidoglycan precursor phospho-MurNAc-pentapeptide from UDP-MurNAc-pentapeptide onto the lipid carrier undecaprenyl phosphate, yielding undecaprenyl-pyrophosphoryl-MurNAc-pentapeptide, known as lipid I. The sequence is that of Phospho-N-acetylmuramoyl-pentapeptide-transferase from Buchnera aphidicola subsp. Acyrthosiphon pisum (strain Tuc7).